Here is a 117-residue protein sequence, read N- to C-terminus: uncharacterized protein (117 aa).

This is an uncharacterized protein from Microplitis demolitor bracovirus (isolate Webb) (MdBV).